A 204-amino-acid polypeptide reads, in one-letter code: High frequency lysogenization protein HflD homolog (204 aa).

Belongs to the HflD family.

Its subcellular location is the cytoplasm. The protein resides in the cell inner membrane. The polypeptide is High frequency lysogenization protein HflD homolog (Aeromonas hydrophila subsp. hydrophila (strain ATCC 7966 / DSM 30187 / BCRC 13018 / CCUG 14551 / JCM 1027 / KCTC 2358 / NCIMB 9240 / NCTC 8049)).